The following is a 324-amino-acid chain: Beta-ketoacyl-[acyl-carrier-protein] synthase III (324 aa).

Residues Cys-112 and His-249 contribute to the active site. The segment at Gln-250–Arg-254 is ACP-binding. The active site involves Asn-279.

The protein belongs to the thiolase-like superfamily. FabH family. Homodimer.

It localises to the cytoplasm. The enzyme catalyses malonyl-[ACP] + acetyl-CoA + H(+) = 3-oxobutanoyl-[ACP] + CO2 + CoA. The protein operates within lipid metabolism; fatty acid biosynthesis. Its function is as follows. Catalyzes the condensation reaction of fatty acid synthesis by the addition to an acyl acceptor of two carbons from malonyl-ACP. Catalyzes the first condensation reaction which initiates fatty acid synthesis and may therefore play a role in governing the total rate of fatty acid production. Possesses both acetoacetyl-ACP synthase and acetyl transacylase activities. Its substrate specificity determines the biosynthesis of branched-chain and/or straight-chain of fatty acids. This chain is Beta-ketoacyl-[acyl-carrier-protein] synthase III, found in Streptococcus pyogenes serotype M3 (strain ATCC BAA-595 / MGAS315).